The primary structure comprises 239 residues: 7-cyano-7-deazaguanine synthase (239 aa).

Residue 8 to 18 (FSGGLDSTACL) coordinates ATP. Residues C194, C209, C212, and C215 each coordinate Zn(2+).

This sequence belongs to the QueC family. The cofactor is Zn(2+).

The enzyme catalyses 7-carboxy-7-deazaguanine + NH4(+) + ATP = 7-cyano-7-deazaguanine + ADP + phosphate + H2O + H(+). It participates in purine metabolism; 7-cyano-7-deazaguanine biosynthesis. Functionally, catalyzes the ATP-dependent conversion of 7-carboxy-7-deazaguanine (CDG) to 7-cyano-7-deazaguanine (preQ(0)). The sequence is that of 7-cyano-7-deazaguanine synthase from Pyrococcus horikoshii (strain ATCC 700860 / DSM 12428 / JCM 9974 / NBRC 100139 / OT-3).